The primary structure comprises 447 residues: ATP-dependent protease ATPase subunit HslU (447 aa).

ATP-binding positions include Ile-17, 59-64, Asp-256, Glu-321, and Arg-393; that span reads GVGKTE.

This sequence belongs to the ClpX chaperone family. HslU subfamily. A double ring-shaped homohexamer of HslV is capped on each side by a ring-shaped HslU homohexamer. The assembly of the HslU/HslV complex is dependent on binding of ATP.

The protein resides in the cytoplasm. ATPase subunit of a proteasome-like degradation complex; this subunit has chaperone activity. The binding of ATP and its subsequent hydrolysis by HslU are essential for unfolding of protein substrates subsequently hydrolyzed by HslV. HslU recognizes the N-terminal part of its protein substrates and unfolds these before they are guided to HslV for hydrolysis. This is ATP-dependent protease ATPase subunit HslU from Stutzerimonas stutzeri (strain A1501) (Pseudomonas stutzeri).